The following is an 84-amino-acid chain: MCLKILVRYNTRGNTYSTAWLCALGKVLPFHRWHTMVQTCTPNVTINCQDPAGGALIARCWYLHEGHQTAAFRDVLVVLNKRTN.

The region spanning 1 to 82 (MCLKILVRYN…RDVLVVLNKR (82 aa)) is the SARS ORF8 Ig-like domain. Cys22 and Cys40 are joined by a disulfide.

The protein resides in the host cytoplasm. The protein localises to the host nucleus. Its function is as follows. Non-structural protein which is dispensable for virus replication in cell culture. This is ORF8b protein from Severe acute respiratory syndrome coronavirus (SARS-CoV).